The sequence spans 371 residues: Glycosyltransferase 8 domain-containing protein 1 (371 aa).

The Cytoplasmic segment spans residues 1–7 (MSFRKVN). A helical; Signal-anchor for type II membrane protein membrane pass occupies residues 8-28 (IVILVLAVALFLLVLHHNFLG). Over 29–371 (LSSLLRNEVS…RRHVEISNTK (343 aa)) the chain is Lumenal. N-linked (GlcNAc...) asparagine glycans are attached at residues asparagine 103 and asparagine 257.

Belongs to the glycosyltransferase 8 family.

The protein localises to the membrane. The chain is Glycosyltransferase 8 domain-containing protein 1 (GLT8D1) from Bos taurus (Bovine).